The primary structure comprises 477 residues: Glycogen synthase (477 aa).

Residue K15 participates in ADP-alpha-D-glucose binding.

The protein belongs to the glycosyltransferase 1 family. Bacterial/plant glycogen synthase subfamily.

The enzyme catalyses [(1-&gt;4)-alpha-D-glucosyl](n) + ADP-alpha-D-glucose = [(1-&gt;4)-alpha-D-glucosyl](n+1) + ADP + H(+). It functions in the pathway glycan biosynthesis; glycogen biosynthesis. Its function is as follows. Synthesizes alpha-1,4-glucan chains using ADP-glucose. This chain is Glycogen synthase, found in Myxococcus xanthus (strain DK1622).